A 105-amino-acid chain; its full sequence is Small ribosomal subunit protein uS10 (105 aa).

This sequence belongs to the universal ribosomal protein uS10 family. In terms of assembly, part of the 30S ribosomal subunit.

Functionally, involved in the binding of tRNA to the ribosomes. In Lachnoclostridium phytofermentans (strain ATCC 700394 / DSM 18823 / ISDg) (Clostridium phytofermentans), this protein is Small ribosomal subunit protein uS10.